A 181-amino-acid chain; its full sequence is Bradykinin-potentiating and C-type natriuretic peptides (181 aa).

The signal sequence occupies residues 1–23 (MFVSRLAASGLLLLALLAVSLDG). The propeptide occupies 24–30 (KPLQQWS). Gln31 carries the pyrrolidone carboxylic acid modification. Residues 41–43 (LVV) constitute a propeptide that is removed on maturation. The residue at position 44 (Gln44) is a Pyrrolidone carboxylic acid. Propeptides lie at residues 50 to 78 (TQLQ…AALD) and 90 to 157 (GSKA…KGLA). A disordered region spans residues 74-153 (EAALDTPPAG…GGGGGGARRL (80 aa)). Positions 104-114 (SKGASATSAAS) are enriched in low complexity. Gly residues predominate over residues 140 to 150 (AGGGGGGGGGA). Cys165 and Cys181 are disulfide-bonded.

The protein in the N-terminal section; belongs to the bradykinin-potentiating peptide family. In the C-terminal section; belongs to the natriuretic peptide family. Venom gland.

The protein resides in the secreted. Functionally, bradykinin-potentiating peptide both inhibits the activity of the angiotensin-converting enzyme (ACE) and enhances the action of bradykinin by inhibiting the peptidases that inactivate it. It acts as an indirect hypotensive agent. Antagonizes the vasodilatory actions of bradykinin at the B2 bradykinin receptor. Has no demonstrable hypotensive activity when injected intravenously in rats. Its function is as follows. has a vasorelaxant activity in rat aortic strips and a diuretic potency in anesthetized rats. May act by activating natriuretic receptors (NPR1 and/or NPR2). The protein is Bradykinin-potentiating and C-type natriuretic peptides of Crotalus durissus collilineatus (Brazilian rattlesnake).